Here is a 155-residue protein sequence, read N- to C-terminus: Endoribonuclease YbeY (155 aa).

Zn(2+) contacts are provided by H110, H114, and H120.

This sequence belongs to the endoribonuclease YbeY family. It depends on Zn(2+) as a cofactor.

The protein localises to the cytoplasm. In terms of biological role, single strand-specific metallo-endoribonuclease involved in late-stage 70S ribosome quality control and in maturation of the 3' terminus of the 16S rRNA. The chain is Endoribonuclease YbeY from Deinococcus geothermalis (strain DSM 11300 / CIP 105573 / AG-3a).